Reading from the N-terminus, the 351-residue chain is Flap endonuclease 1 (351 aa).

The interval 1-98 is N-domain; sequence MDLAELVEEI…QELERRKKVK (98 aa). Aspartate 27, aspartate 80, glutamate 154, glutamate 156, aspartate 175, aspartate 177, and aspartate 238 together coordinate Mg(2+). The interval 118-260 is I-domain; sequence ELKKYAQMSI…TAYRIIKKYG (143 aa). Residues 343–351 form an interaction with PCNA region; it reads RQTGLDQWF.

Belongs to the XPG/RAD2 endonuclease family. FEN1 subfamily. In terms of assembly, interacts with PCNA. PCNA stimulates the nuclease activity without altering cleavage specificity. The cofactor is Mg(2+).

Functionally, structure-specific nuclease with 5'-flap endonuclease and 5'-3' exonuclease activities involved in DNA replication and repair. During DNA replication, cleaves the 5'-overhanging flap structure that is generated by displacement synthesis when DNA polymerase encounters the 5'-end of a downstream Okazaki fragment. Binds the unpaired 3'-DNA end and kinks the DNA to facilitate 5' cleavage specificity. Cleaves one nucleotide into the double-stranded DNA from the junction in flap DNA, leaving a nick for ligation. Also involved in the base excision repair (BER) pathway. Acts as a genome stabilization factor that prevents flaps from equilibrating into structures that lead to duplications and deletions. Also possesses 5'-3' exonuclease activity on nicked or gapped double-stranded DNA. The sequence is that of Flap endonuclease 1 from Sulfurisphaera tokodaii (strain DSM 16993 / JCM 10545 / NBRC 100140 / 7) (Sulfolobus tokodaii).